Here is a 119-residue protein sequence, read N- to C-terminus: uncharacterized protein (119 aa).

The chain crosses the membrane as a helical span at residues 80 to 104 (VFPLVYLFCVVFQFLSLGCYLSIFF).

The protein resides in the membrane. This is an uncharacterized protein from Saccharomyces cerevisiae (strain ATCC 204508 / S288c) (Baker's yeast).